The chain runs to 498 residues: N-acyl-D-aspartate deacylase (498 aa).

Positions 478–498 (AERPGQVLAPGDAIPWSQQSE) are disordered.

The protein belongs to the metallo-dependent hydrolases superfamily. N-acyl-D-amino-acid deacylase family. It depends on Zn(2+) as a cofactor.

It localises to the cytoplasm. The enzyme catalyses an N-acyl-D-aspartate + H2O = D-aspartate + a carboxylate. The chain is N-acyl-D-aspartate deacylase from Alcaligenes xylosoxydans xylosoxydans (Achromobacter xylosoxidans).